Reading from the N-terminus, the 159-residue chain is Large ribosomal subunit protein uL11 (159 aa).

It belongs to the universal ribosomal protein uL11 family. In terms of assembly, part of the ribosomal stalk of the 50S ribosomal subunit. Interacts with L10 and the large rRNA to form the base of the stalk. L10 forms an elongated spine to which L12 dimers bind in a sequential fashion forming a multimeric L10(L12)X complex.

Forms part of the ribosomal stalk which helps the ribosome interact with GTP-bound translation factors. In Methanococcus maripaludis (strain C5 / ATCC BAA-1333), this protein is Large ribosomal subunit protein uL11.